Here is a 253-residue protein sequence, read N- to C-terminus: Acidic endochitinase Q (253 aa).

A signal peptide spans 1–24 (MEFSGSPMALFCCVFFLFLTGSLA). The Proton donor role is filled by E92. A disulfide bridge connects residues C212 and C244.

This sequence belongs to the glycosyl hydrolase 19 family. Chitinase class I subfamily.

It is found in the secreted. It catalyses the reaction Random endo-hydrolysis of N-acetyl-beta-D-glucosaminide (1-&gt;4)-beta-linkages in chitin and chitodextrins.. Functionally, defense against chitin-containing fungal pathogens. This is Acidic endochitinase Q from Nicotiana tabacum (Common tobacco).